Consider the following 588-residue polypeptide: Putative pentatricopeptide repeat-containing protein At5g52630 (588 aa).

PPR repeat units lie at residues 14–48, 49–79, 80–114, 115–149, 150–180, 181–215, 216–250, 251–281, 282–316, 317–351, and 352–386; these read NYNQ…GLSL, IPLV…SPQK, SSTT…NLRP, DDHV…GYDA, DVFV…MPQR, NVVT…NLAV, NDYS…SFDS, SSFV…VPVK, NLGI…GMKP, NFIT…RIEP, and TDKH…PTES. Residues 387-462 are type E motif; it reads VWGALLTSCT…ETGLSWVEER (76 aa). The tract at residues 463-493 is type E(+) motif; the sequence is NKVHTFAAGERRHEKSKEIYEKLAELGEEME. The segment at 494-588 is type DYW motif; sequence KAGYIADTSY…DGKCSCNDYW (95 aa).

The protein belongs to the PPR family. PCMP-H subfamily.

This chain is Putative pentatricopeptide repeat-containing protein At5g52630 (PCMP-H52), found in Arabidopsis thaliana (Mouse-ear cress).